A 372-amino-acid polypeptide reads, in one-letter code: GDP-mannose transporter GONST3 (372 aa).

The next 10 helical transmembrane spans lie at 33 to 53 (ASVY…SIIN), 60 to 80 (FPYP…GVLL), 92 to 112 (LNLL…LSLF), 125 to 145 (TFIV…TLFL), 155 to 175 (WGSL…DYQF), 177 to 197 (IAAY…FVYI), 209 to 229 (WGLV…ELLI), 251 to 271 (VVLP…FGFS), 280 to 300 (GFTV…LMVW), and 303 to 323 (HSTF…VMYQ). Residues 331–372 (NATQEAKPQEQDEEQEKLLEMQENKESNSVDIKETLKSEEKL) form a disordered region. Residues 346–372 (EKLLEMQENKESNSVDIKETLKSEEKL) show a composition bias toward basic and acidic residues.

Belongs to the nucleotide-sugar transporter family. GDP-Mannose:GMP antiporter (GMA) (TC 2.A.7.13) subfamily. As to expression, expressed in rosette leaves, stems, flowers and siliques.

The protein resides in the golgi apparatus membrane. GDP-mannose transporter that may be involved in the import of GDP-mannose from the cytoplasm into the Golgi lumen. The polypeptide is GDP-mannose transporter GONST3 (Arabidopsis thaliana (Mouse-ear cress)).